The following is a 578-amino-acid chain: Glutathione hydrolase 2 (578 aa).

The N-terminal stretch at 1–26 is a signal peptide; sequence MNSFMSLVRTATIALLLIAFLQNANA. Residue Asn-94 is glycosylated (N-linked (GlcNAc...) asparagine). Residue Arg-103 participates in L-glutamate binding. N-linked (GlcNAc...) asparagine glycans are attached at residues Asn-176 and Asn-227. The active-site Nucleophile is Thr-374. L-glutamate is bound by residues Thr-392, Asn-394, Glu-413, Asp-416, 446 to 447, and 467 to 468; these read SS and GG. Asn-511 is a glycosylation site (N-linked (GlcNAc...) asparagine).

The protein belongs to the gamma-glutamyltransferase family. In terms of tissue distribution, expressed in roots, immature trichomes and pollen. In developing siliques, specifically expressed in the embryo, endosperm, outer integument and a small portion of the funiculus.

The protein localises to the secreted. The protein resides in the extracellular space. It localises to the apoplast. The catalysed reaction is an N-terminal (5-L-glutamyl)-[peptide] + an alpha-amino acid = 5-L-glutamyl amino acid + an N-terminal L-alpha-aminoacyl-[peptide]. It carries out the reaction glutathione + H2O = L-cysteinylglycine + L-glutamate. It catalyses the reaction an S-substituted glutathione + H2O = an S-substituted L-cysteinylglycine + L-glutamate. Its pathway is sulfur metabolism; glutathione metabolism. In terms of biological role, may be required for glutathione transport into developing seeds. The chain is Glutathione hydrolase 2 (GGT2) from Arabidopsis thaliana (Mouse-ear cress).